The following is a 226-amino-acid chain: Protein transport protein sec20 (226 aa).

At 1–189 (MADVLNALEE…IKSLKLSDRS (189 aa)) the chain is on the cytoplasmic side. Positions 53–75 (LRYEKAVQEYIRLNRRYRNKIAS) form a coiled coil. The residue at position 97 (serine 97) is a Phosphoserine. Residues 190-210 (DYFLVVSGFGFFIFVVVYLLF) traverse the membrane as a helical; Anchor for type IV membrane protein segment. Residues 211 to 226 (KRIVWPILSMFLWFLR) lie on the Lumenal side of the membrane.

Belongs to the SEC20 family. Component of a SNARE complex consisting of ufe1, sec20, sec22 and use1. Interacts with tip20 through its cytoplasmic domain.

The protein resides in the endoplasmic reticulum membrane. Its function is as follows. SNARE required for targeting and fusion of Golgi-derived retrograde transport vesicles with the ER. The protein is Protein transport protein sec20 of Schizosaccharomyces pombe (strain 972 / ATCC 24843) (Fission yeast).